The following is a 112-amino-acid chain: Divalent-cation tolerance protein CutA (112 aa).

Cu cation contacts are provided by Cys16, His83, and His84.

This sequence belongs to the CutA family. In terms of assembly, homotrimer. Cu cation is required as a cofactor.

The protein localises to the cytoplasm. Functionally, involved in resistance toward heavy metals. In Shigella boydii serotype 18 (strain CDC 3083-94 / BS512), this protein is Divalent-cation tolerance protein CutA.